A 254-amino-acid chain; its full sequence is Allene oxide cyclase 4, chloroplastic (254 aa).

The transit peptide at 1-52 (MIMASSAAASISMITLRNLSRNHQSHQSTFLGFSRSFHNQRISSNSPGLSTR) directs the protein to the chloroplast.

The protein belongs to the allene oxide cyclase family. Highly expressed in fully developed leaves.

The protein resides in the plastid. It is found in the chloroplast. It catalyses the reaction (9Z,13S,15Z)-12,13-epoxyoctadeca-9,11,15-trienoate = (9S,13S,15Z)-12-oxophyto-10,15-dienoate. Functionally, involved in the production of 12-oxo-phytodienoic acid (OPDA), a precursor of jasmonic acid. This Arabidopsis thaliana (Mouse-ear cress) protein is Allene oxide cyclase 4, chloroplastic (AOC4).